A 329-amino-acid polypeptide reads, in one-letter code: R-linalool synthase (329 aa).

Asp-79 serves as a coordination point for Mg(2+). The DDXXD motif signature appears at 79–83; that stretch reads DDQFD. Arg-172 provides a ligand contact to substrate. Mg(2+)-binding residues include Asn-218 and Ser-222. The short motif at 218–226 is the NXXXSXXXD motif element; the sequence is NELHSFEKD. Residue Lys-225 coordinates substrate. Asp-226 contacts Mg(2+). Residue 308–309 participates in substrate binding; sequence RY.

The protein belongs to the terpene synthase family. Homodimer. Mg(2+) serves as cofactor.

The enzyme catalyses (2E)-geranyl diphosphate + H2O = (R)-linalool + diphosphate. It carries out the reaction (2E,6E)-farnesyl diphosphate + H2O = (6E)-nerolidol + diphosphate. Its function is as follows. In vitro, catalyzes the formation of R-linalool from geranyl diphosphate (GPP). Can also accept farnesyl diphosphate (FPP) as substrate to produce trans-nerolidol. The sequence is that of R-linalool synthase from Streptomyces clavuligerus.